The primary structure comprises 871 residues: Dual O-methyltransferase/FAD-dependent monooxygenase CTB3 (871 aa).

The tract at residues 1–429 (MMQFQRDLEA…GLLTVRSAGQ (429 aa)) is O-methyltransferase. Residue D279 coordinates S-adenosyl-L-methionine. Catalysis depends on H331, which acts as the Proton acceptor. Residues 430–871 (TALSGTNTLT…NLVDCSEFVF (442 aa)) form an FAD-dependent monooxygenase region. Positions 485, 569, and 806 each coordinate FAD.

In the C-terminal section; belongs to the paxM FAD-dependent monooxygenase family. It in the N-terminal section; belongs to the class I-like SAM-binding methyltransferase superfamily. Cation-independent O-methyltransferase family. COMT subfamily.

It carries out the reaction nor-toralactone + S-adenosyl-L-methionine = toralactone + S-adenosyl-L-homocysteine + H(+). The enzyme catalyses toralactone + NADH + O2 + H(+) = 1-(3,4,5-trihydroxy-7-methoxynaphthalen-2-yl)propan-2-one + CO2 + NAD(+). The protein operates within mycotoxin biosynthesis. Its function is as follows. Dual O-methyltransferase/FAD-dependent monooxygenase; part of the gene cluster that mediates the biosynthesis of cercosporin, a light-activated, non-host-selective toxin. The perylenequinone chromophore of cercosporin absorbs light energy to attain an electronically-activated triplet state and produces active oxygen species such as the hydroxyl radical, superoxide, hydrogen peroxide or singlet oxygen upon reaction with oxygen molecules. These reactive oxygen species cause damage to various cellular components including lipids, proteins and nucleic acids. The first step of cercosporin biosynthesis is performed by the polyketide synthase CTB1 which catalyzes the formation of nor-toralactone. The starter unit acyltransferase (SAT) domain of CTB1 initiates polyketide extension by the selective utilization of acetyl-CoA, which is elongated to the heptaketide in the beta-ketoacyl synthase (KS) domain by successive condensations with six malonyl units introduced by the malonyl acyltransferase (MAT) domain. The product template (PT) domain catalyzes C4-C9 and C2-C11 aldol cyclizations and dehydrations to a trihydroxynaphthalene, which is thought to be delivered to the thioesterase (TE) domain for product release. The bifunctional enzyme CTB3 then methylates nor-toralactone to toralactone before conducting an unusual oxidative aromatic ring opening. The O-methyltransferase CTB2 further methylates the nascent OH-6 of the CBT3 product, blocking further oxidation at this site before the reductase CTB6 reduces the 2-oxopropyl ketone at position C7, giving naphthalene. The FAD-dependent monooxygenase CTB5 in concert with the multicopper oxidase CTB12 are responsible for homodimerization of naphthalene with CTB7 installing the dioxepine moiety, finally producing cercosporin. The fasciclin domain-containing protein CTB11 might act with CTB5 and CTB12 whereas the roles of CTB9 and CTB10 have still to be elucidated. In Cercospora nicotianae (Barn spot disease fungus), this protein is Dual O-methyltransferase/FAD-dependent monooxygenase CTB3.